The sequence spans 152 residues: 3-hydroxyacyl-[acyl-carrier-protein] dehydratase FabZ (152 aa).

His57 is a catalytic residue.

It belongs to the thioester dehydratase family. FabZ subfamily.

Its subcellular location is the cytoplasm. The enzyme catalyses a (3R)-hydroxyacyl-[ACP] = a (2E)-enoyl-[ACP] + H2O. Involved in unsaturated fatty acids biosynthesis. Catalyzes the dehydration of short chain beta-hydroxyacyl-ACPs and long chain saturated and unsaturated beta-hydroxyacyl-ACPs. The sequence is that of 3-hydroxyacyl-[acyl-carrier-protein] dehydratase FabZ from Pasteurella multocida (strain Pm70).